The following is a 132-amino-acid chain: Small ribosomal subunit protein uS8 (132 aa).

This sequence belongs to the universal ribosomal protein uS8 family. Part of the 30S ribosomal subunit. Contacts proteins S5 and S12.

One of the primary rRNA binding proteins, it binds directly to 16S rRNA central domain where it helps coordinate assembly of the platform of the 30S subunit. This Thermoanaerobacter pseudethanolicus (strain ATCC 33223 / 39E) (Clostridium thermohydrosulfuricum) protein is Small ribosomal subunit protein uS8.